The primary structure comprises 266 residues: Orotidine 5'-phosphate decarboxylase (266 aa).

Residues D38, 60–62, 92–101, Y218, and R236 each bind substrate; these read KTH and DRKFADIGNT. K94 functions as the Proton donor in the catalytic mechanism.

Belongs to the OMP decarboxylase family.

The catalysed reaction is orotidine 5'-phosphate + H(+) = UMP + CO2. It functions in the pathway pyrimidine metabolism; UMP biosynthesis via de novo pathway; UMP from orotate: step 2/2. This is Orotidine 5'-phosphate decarboxylase (URA3) from Candida maltosa (Yeast).